The primary structure comprises 136 residues: Large ribosomal subunit protein uL16 (136 aa).

This sequence belongs to the universal ribosomal protein uL16 family. Part of the 50S ribosomal subunit.

In terms of biological role, binds 23S rRNA and is also seen to make contacts with the A and possibly P site tRNAs. The protein is Large ribosomal subunit protein uL16 of Vibrio vulnificus (strain YJ016).